Here is a 433-residue protein sequence, read N- to C-terminus: Adenylosuccinate synthetase (433 aa).

GTP is bound by residues 11 to 17 and 39 to 41; these read GDEGKGK and GHT. D12 (proton acceptor) is an active-site residue. Residues D12 and G39 each contribute to the Mg(2+) site. IMP-binding positions include 12–15, 37–40, T134, R148, N230, T245, and R309; these read DEGK and NAGH. H40 serves as the catalytic Proton donor. 305–311 is a binding site for substrate; sequence VTTGRKR. GTP is bound by residues R311, 337-339, and 419-421; these read KLD and GTG.

The protein belongs to the adenylosuccinate synthetase family. Homodimer. Requires Mg(2+) as cofactor.

The protein localises to the cytoplasm. It catalyses the reaction IMP + L-aspartate + GTP = N(6)-(1,2-dicarboxyethyl)-AMP + GDP + phosphate + 2 H(+). The protein operates within purine metabolism; AMP biosynthesis via de novo pathway; AMP from IMP: step 1/2. Its function is as follows. Plays an important role in the de novo pathway and in the salvage pathway of purine nucleotide biosynthesis. Catalyzes the first committed step in the biosynthesis of AMP from IMP. This chain is Adenylosuccinate synthetase, found in Saccharomyces cerevisiae (strain JAY291) (Baker's yeast).